A 167-amino-acid polypeptide reads, in one-letter code: UTP pyrophosphatase (167 aa).

It catalyses the reaction UTP + H2O = UMP + diphosphate + H(+). In terms of biological role, specifically catalyzes the hydrolysis of UTP to UMP and diphosphate in vitro, albeit at apparently slow rate. Shows no activity towards ATP, GTP, CTP, dTTP and ITP as substrates. The protein is UTP pyrophosphatase of Escherichia coli (strain K12).